A 525-amino-acid polypeptide reads, in one-letter code: GMP synthase [glutamine-hydrolyzing] (525 aa).

A Glutamine amidotransferase type-1 domain is found at 9–207 (RILILDFGSQ…VSDICGCEKQ (199 aa)). Cys86 functions as the Nucleophile in the catalytic mechanism. Residues His181 and Glu183 contribute to the active site. The region spanning 208 to 400 (WTPAKIIDDA…LGLPYNMLYR (193 aa)) is the GMPS ATP-PPase domain. Residue 235–241 (SGGVDSS) coordinates ATP.

As to quaternary structure, homodimer.

The enzyme catalyses XMP + L-glutamine + ATP + H2O = GMP + L-glutamate + AMP + diphosphate + 2 H(+). It functions in the pathway purine metabolism; GMP biosynthesis; GMP from XMP (L-Gln route): step 1/1. Functionally, catalyzes the synthesis of GMP from XMP. The protein is GMP synthase [glutamine-hydrolyzing] of Idiomarina loihiensis (strain ATCC BAA-735 / DSM 15497 / L2-TR).